Here is a 203-residue protein sequence, read N- to C-terminus: Thymidylate kinase (203 aa).

ATP is bound at residue glycine 9–threonine 16.

The protein belongs to the thymidylate kinase family.

It catalyses the reaction dTMP + ATP = dTDP + ADP. In terms of biological role, phosphorylation of dTMP to form dTDP in both de novo and salvage pathways of dTTP synthesis. This is Thymidylate kinase from Staphylococcus haemolyticus (strain JCSC1435).